The chain runs to 859 residues: Villin-like protein (859 aa).

Gelsolin-like repeat units follow at residues 24 to 76 (LKML…EARE), 148 to 188 (VSAT…SEKA), 264 to 308 (LVVQ…QEKK), 401 to 450 (LQRQ…EDTK), 521 to 561 (TRTM…DQRE), and 624 to 665 (LVLT…WKKE). The HP domain maps to 793-859 (SMVNGSLPRE…QQAKKKLGFF (67 aa)).

This sequence belongs to the villin/gelsolin family.

Its function is as follows. Possible tumor suppressor. The polypeptide is Villin-like protein (Mus musculus (Mouse)).